We begin with the raw amino-acid sequence, 478 residues long: Probable cytosol aminopeptidase (478 aa).

Mn(2+)-binding residues include lysine 244 and aspartate 249. Residue lysine 256 is part of the active site. Mn(2+) contacts are provided by aspartate 267, aspartate 326, and glutamate 328. The active site involves arginine 330.

This sequence belongs to the peptidase M17 family. It depends on Mn(2+) as a cofactor.

The protein localises to the cytoplasm. It catalyses the reaction Release of an N-terminal amino acid, Xaa-|-Yaa-, in which Xaa is preferably Leu, but may be other amino acids including Pro although not Arg or Lys, and Yaa may be Pro. Amino acid amides and methyl esters are also readily hydrolyzed, but rates on arylamides are exceedingly low.. The catalysed reaction is Release of an N-terminal amino acid, preferentially leucine, but not glutamic or aspartic acids.. In terms of biological role, presumably involved in the processing and regular turnover of intracellular proteins. Catalyzes the removal of unsubstituted N-terminal amino acids from various peptides. This Fusobacterium nucleatum subsp. nucleatum (strain ATCC 25586 / DSM 15643 / BCRC 10681 / CIP 101130 / JCM 8532 / KCTC 2640 / LMG 13131 / VPI 4355) protein is Probable cytosol aminopeptidase.